Consider the following 58-residue polypeptide: Large ribosomal subunit protein uL30 (58 aa).

Belongs to the universal ribosomal protein uL30 family. Part of the 50S ribosomal subunit.

This Buchnera aphidicola subsp. Baizongia pistaciae (strain Bp) protein is Large ribosomal subunit protein uL30.